A 98-amino-acid polypeptide reads, in one-letter code: Protein Asterix (98 aa).

Helical transmembrane passes span 32-52 (LFSI…CLWV) and 78-98 (VSLS…NLFV).

It belongs to the Asterix family.

It is found in the membrane. The chain is Protein Asterix from Dictyostelium discoideum (Social amoeba).